Here is a 244-residue protein sequence, read N- to C-terminus: Small ribosomal subunit protein uS2 (244 aa).

The interval 224 to 244 (GQQGSDEAEEAEEAAEEVVAE) is disordered. The segment covering 229–244 (DEAEEAEEAAEEVVAE) has biased composition (acidic residues).

The protein belongs to the universal ribosomal protein uS2 family.

The chain is Small ribosomal subunit protein uS2 from Desulfitobacterium hafniense (strain DSM 10664 / DCB-2).